We begin with the raw amino-acid sequence, 195 residues long: Imidazole glycerol phosphate synthase subunit HisH (195 aa).

In terms of domain architecture, Glutamine amidotransferase type-1 spans 1-193 (MIAIVDYGVG…RETTCNSTQQ (193 aa)). Catalysis depends on Cys-78, which acts as the Nucleophile. Residues His-168 and Glu-170 contribute to the active site.

Heterodimer of HisH and HisF.

It is found in the cytoplasm. The enzyme catalyses 5-[(5-phospho-1-deoxy-D-ribulos-1-ylimino)methylamino]-1-(5-phospho-beta-D-ribosyl)imidazole-4-carboxamide + L-glutamine = D-erythro-1-(imidazol-4-yl)glycerol 3-phosphate + 5-amino-1-(5-phospho-beta-D-ribosyl)imidazole-4-carboxamide + L-glutamate + H(+). It carries out the reaction L-glutamine + H2O = L-glutamate + NH4(+). Its pathway is amino-acid biosynthesis; L-histidine biosynthesis; L-histidine from 5-phospho-alpha-D-ribose 1-diphosphate: step 5/9. IGPS catalyzes the conversion of PRFAR and glutamine to IGP, AICAR and glutamate. The HisH subunit catalyzes the hydrolysis of glutamine to glutamate and ammonia as part of the synthesis of IGP and AICAR. The resulting ammonia molecule is channeled to the active site of HisF. The polypeptide is Imidazole glycerol phosphate synthase subunit HisH (Exiguobacterium sibiricum (strain DSM 17290 / CCUG 55495 / CIP 109462 / JCM 13490 / 255-15)).